The sequence spans 98 residues: MSLTYMNMFMAFTISLLGLLMYRSHMMSSLLCLEGMMLSLFVMMTMAILNTHLTLASMIPIILLVFAACEAALGLSLLVMVSTTYGMDYVQNLNLLQC.

Helical transmembrane passes span 1–21 (MSLT…GLLM), 29–49 (SLLC…MAIL), and 61–81 (IILL…LVMV).

It belongs to the complex I subunit 4L family. In terms of assembly, core subunit of respiratory chain NADH dehydrogenase (Complex I) which is composed of 45 different subunits.

It localises to the mitochondrion inner membrane. It carries out the reaction a ubiquinone + NADH + 5 H(+)(in) = a ubiquinol + NAD(+) + 4 H(+)(out). Core subunit of the mitochondrial membrane respiratory chain NADH dehydrogenase (Complex I) which catalyzes electron transfer from NADH through the respiratory chain, using ubiquinone as an electron acceptor. Part of the enzyme membrane arm which is embedded in the lipid bilayer and involved in proton translocation. This chain is NADH-ubiquinone oxidoreductase chain 4L (MT-ND4L), found in Vampyressa melissa (Melissa's yellow-eared bat).